Reading from the N-terminus, the 335-residue chain is tRNA N6-adenosine threonylcarbamoyltransferase (335 aa).

Positions 107 and 111 each coordinate Fe cation. Substrate-binding positions include Leu-129 to Gly-133, Asp-162, Gly-175, and Asn-268. Residue Asp-296 coordinates Fe cation.

This sequence belongs to the KAE1 / TsaD family. Fe(2+) serves as cofactor.

It is found in the cytoplasm. The enzyme catalyses L-threonylcarbamoyladenylate + adenosine(37) in tRNA = N(6)-L-threonylcarbamoyladenosine(37) in tRNA + AMP + H(+). Required for the formation of a threonylcarbamoyl group on adenosine at position 37 (t(6)A37) in tRNAs that read codons beginning with adenine. Is involved in the transfer of the threonylcarbamoyl moiety of threonylcarbamoyl-AMP (TC-AMP) to the N6 group of A37, together with TsaE and TsaB. TsaD likely plays a direct catalytic role in this reaction. The chain is tRNA N6-adenosine threonylcarbamoyltransferase from Campylobacter fetus subsp. fetus (strain 82-40).